Here is a 214-residue protein sequence, read N- to C-terminus: Adenylate kinase (214 aa).

10 to 15 (GAGKGT) lines the ATP pocket. The segment at 30–59 (STGDMLRAAIKEGTPLGLEAKKVMDAGQLI) is NMP. Residues T31, R36, 57–59 (QLI), 85–88 (GFPR), and Q92 each bind AMP. Positions 122 to 159 (GRRVHPGSGRVYHVVYNPPKVADKDNETGEELIIRADD) are LID. Residues R123 and 132 to 133 (VY) contribute to the ATP site. Positions 156 and 167 each coordinate AMP. Residue Q200 coordinates ATP.

This sequence belongs to the adenylate kinase family. As to quaternary structure, monomer.

The protein resides in the cytoplasm. It carries out the reaction AMP + ATP = 2 ADP. It functions in the pathway purine metabolism; AMP biosynthesis via salvage pathway; AMP from ADP: step 1/1. In terms of biological role, catalyzes the reversible transfer of the terminal phosphate group between ATP and AMP. Plays an important role in cellular energy homeostasis and in adenine nucleotide metabolism. The protein is Adenylate kinase of Pseudoalteromonas translucida (strain TAC 125).